Here is an 848-residue protein sequence, read N- to C-terminus: DNA mismatch repair protein MutS (848 aa).

Residue 610–617 participates in ATP binding; that stretch reads GPNMGGKS.

This sequence belongs to the DNA mismatch repair MutS family.

Functionally, this protein is involved in the repair of mismatches in DNA. It is possible that it carries out the mismatch recognition step. This protein has a weak ATPase activity. In Francisella philomiragia subsp. philomiragia (strain ATCC 25017 / CCUG 19701 / FSC 153 / O#319-036), this protein is DNA mismatch repair protein MutS.